A 406-amino-acid chain; its full sequence is Peptide transporter imqD (406 aa).

The tract at residues 1–25 (MTAPADSTEKSETSETTTLQTTEVS) is disordered. The segment covering 14–25 (SETTTLQTTEVS) has biased composition (low complexity). A run of 6 helical transmembrane segments spans residues 184 to 204 (GLVA…LSQA), 220 to 240 (IPND…GPVI), 262 to 282 (ATGF…QKII), 309 to 329 (VFLQ…SFVT), 344 to 364 (AVVQ…GIAI), and 373 to 393 (LIWM…VFWI).

The protein belongs to the major facilitator superfamily. Proton-dependent oligopeptide transporter (POT/PTR) (TC 2.A.17) family.

The protein resides in the membrane. Peptide transporter; part of the gene cluster that mediates the biosynthesis of imizoquins A to D, tripeptide-derived alkaloids that serve a protective role against oxidative stress that are essential for normal germination. This Aspergillus flavus (strain ATCC 200026 / FGSC A1120 / IAM 13836 / NRRL 3357 / JCM 12722 / SRRC 167) protein is Peptide transporter imqD.